The sequence spans 267 residues: Large ribosomal subunit protein uL4 (267 aa).

Belongs to the universal ribosomal protein uL4 family. As to quaternary structure, part of the 50S ribosomal subunit.

Functionally, one of the primary rRNA binding proteins, this protein initially binds near the 5'-end of the 23S rRNA. It is important during the early stages of 50S assembly. It makes multiple contacts with different domains of the 23S rRNA in the assembled 50S subunit and ribosome. Forms part of the polypeptide exit tunnel. This is Large ribosomal subunit protein uL4 from Saccharolobus solfataricus (strain ATCC 35092 / DSM 1617 / JCM 11322 / P2) (Sulfolobus solfataricus).